A 371-amino-acid polypeptide reads, in one-letter code: Transaldolase (371 aa).

K140 acts as the Schiff-base intermediate with substrate in catalysis.

The protein belongs to the transaldolase family. Type 2 subfamily.

Its subcellular location is the cytoplasm. It catalyses the reaction D-sedoheptulose 7-phosphate + D-glyceraldehyde 3-phosphate = D-erythrose 4-phosphate + beta-D-fructose 6-phosphate. The protein operates within carbohydrate degradation; pentose phosphate pathway; D-glyceraldehyde 3-phosphate and beta-D-fructose 6-phosphate from D-ribose 5-phosphate and D-xylulose 5-phosphate (non-oxidative stage): step 2/3. In terms of biological role, transaldolase is important for the balance of metabolites in the pentose-phosphate pathway. In Arthrobacter sp. (strain FB24), this protein is Transaldolase.